Consider the following 122-residue polypeptide: Serum amyloid A-1 protein (122 aa).

The N-terminal stretch at 1–19 (MKLLTSLVFCSLLLGVCHG) is a signal peptide. The segment at 20 to 45 (GFFSFVHEAFQGAGDMWRAYTDMKEA) is important for amyloid formation. Residues 91–108 (HEDTIADQEANRHGRSGK) are compositionally biased toward basic and acidic residues. The segment at 91–122 (HEDTIADQEANRHGRSGKDPNYYRPPGLPDKY) is disordered.

This sequence belongs to the SAA family. Homohexamer; dimer of trimers. Can form amyloid fibrils after partial proteolysis; the native, undenatured protein does not form amyloid fibrils (in vitro). Apolipoprotein of the HDL complex. Binds to heparin. Detected in blood plasma (at protein level). Detected in liver.

It localises to the secreted. In terms of biological role, major acute phase protein. The protein is Serum amyloid A-1 protein (Saa1) of Mus musculus (Mouse).